A 745-amino-acid chain; its full sequence is uncharacterized protein (745 aa).

An HTH araC/xylS-type domain is found at 158–256; sequence NQVCDYIELH…HQTPKQYRGD (99 aa). 2 DNA-binding regions (H-T-H motif) span residues 175 to 196 and 223 to 246; these read SELSEYVGWSESHLSKKFTESL and ITDIALQNGFSSAASFARTFKHFT.

This is an uncharacterized protein from Staphylococcus aureus (strain COL).